The primary structure comprises 103 residues: Large ribosomal subunit protein bL21 (103 aa).

The protein belongs to the bacterial ribosomal protein bL21 family. Part of the 50S ribosomal subunit. Contacts protein L20.

In terms of biological role, this protein binds to 23S rRNA in the presence of protein L20. This Haemophilus influenzae (strain PittEE) protein is Large ribosomal subunit protein bL21.